Consider the following 478-residue polypeptide: MKTWLMGFSEFLLRYKLVWSETWKIRKQLDTPVREKDENEFLPAHLELIETPVSRRPRLVAYFIMGFLVIAFILSVLGQVEIVATANGKLTHSGRSKEIKPIENSIVKEIIVKEGESVRKGDVLLKLTALGAEADTLKTQSSLLQARLEQTRYQILSRSIELNKLPELKLPDEPYFQNVSEEEVLRLTSLIKEQFSTWQNQKYQKELNLDKKRAERLTVLARINRYENLSRVEKSRLDDFSSLLHKQAIAKHAVLEQENKYVEAVNELRVYKSQLEQIESEILSAKEEYQLVTQLFKNEILDKLRQTTDNIGLLTLELAKNEERQQASVIRAPVSVKVQQLKVHTEGGVVTTAETLMVIVPEDDTLEVTALVQNKDIGFINVGQNAIIKVEAFPYTRYGYLVGKVKNINLDAIEDQRLGLVFNVIISIEENCLSTGNKNIPLSSGMAVTAEIKTGMRSVISYLLSPLEESVTESLRER.

The Cytoplasmic segment spans residues 1-59 (MKTWLMGFSEFLLRYKLVWSETWKIRKQLDTPVREKDENEFLPAHLELIETPVSRRPRL). Residues 60-80 (VAYFIMGFLVIAFILSVLGQV) traverse the membrane as a helical; Signal-anchor for type II membrane protein segment. The Periplasmic portion of the chain corresponds to 81-478 (EIVATANGKL…ESVTESLRER (398 aa)).

This sequence belongs to the membrane fusion protein (MFP) (TC 8.A.1) family.

The protein resides in the cell inner membrane. Involved in the transport of hemolysin A. The polypeptide is Hemolysin secretion protein D, plasmid (hlyD) (Escherichia coli).